Reading from the N-terminus, the 200-residue chain is Small ribosomal subunit protein uS4 (200 aa).

Positions 22 to 41 (TGKEIEKRPYAPGQHGPNQR) are disordered. The S4 RNA-binding domain maps to 92 to 152 (TRLDNLVYRL…EKSQNLAVVG (61 aa)).

It belongs to the universal ribosomal protein uS4 family. As to quaternary structure, part of the 30S ribosomal subunit. Contacts protein S5. The interaction surface between S4 and S5 is involved in control of translational fidelity.

Its function is as follows. One of the primary rRNA binding proteins, it binds directly to 16S rRNA where it nucleates assembly of the body of the 30S subunit. Functionally, with S5 and S12 plays an important role in translational accuracy. This chain is Small ribosomal subunit protein uS4, found in Lysinibacillus sphaericus (strain C3-41).